We begin with the raw amino-acid sequence, 388 residues long: Succinate--CoA ligase [ADP-forming] subunit beta (388 aa).

The 236-residue stretch at 9–244 (KQLFSRYGLP…PSQEDPREAQ (236 aa)) folds into the ATP-grasp domain. Residues Lys-46, 53–55 (GRG), Glu-99, Thr-102, and Glu-107 each bind ATP. Asn-199 and Asp-213 together coordinate Mg(2+). Substrate-binding positions include Asn-264 and 321–323 (GIV).

It belongs to the succinate/malate CoA ligase beta subunit family. In terms of assembly, heterotetramer of two alpha and two beta subunits. Mg(2+) is required as a cofactor.

It catalyses the reaction succinate + ATP + CoA = succinyl-CoA + ADP + phosphate. The catalysed reaction is GTP + succinate + CoA = succinyl-CoA + GDP + phosphate. The protein operates within carbohydrate metabolism; tricarboxylic acid cycle; succinate from succinyl-CoA (ligase route): step 1/1. Functionally, succinyl-CoA synthetase functions in the citric acid cycle (TCA), coupling the hydrolysis of succinyl-CoA to the synthesis of either ATP or GTP and thus represents the only step of substrate-level phosphorylation in the TCA. The beta subunit provides nucleotide specificity of the enzyme and binds the substrate succinate, while the binding sites for coenzyme A and phosphate are found in the alpha subunit. The chain is Succinate--CoA ligase [ADP-forming] subunit beta from Proteus mirabilis (strain HI4320).